The chain runs to 144 residues: Large ribosomal subunit protein uL15 (144 aa).

A disordered region spans residues 1–53; it reads MRLNTLSPAEGAKHAPKRVGRGIGSGLGKTGGRGHKGQKSRSGGGVRRGFEGG. Residues 21-31 are compositionally biased toward gly residues; that stretch reads RGIGSGLGKTG.

The protein belongs to the universal ribosomal protein uL15 family. As to quaternary structure, part of the 50S ribosomal subunit.

Binds to the 23S rRNA. The chain is Large ribosomal subunit protein uL15 from Proteus mirabilis (strain HI4320).